The following is a 1196-amino-acid chain: Sorbin and SH3 domain-containing protein 2 (1196 aa).

2 disordered regions span residues 25-57 (VQSSPNLLAAGRESHSPDSAWRSYNGRNPETLN) and 75-95 (PNLQDKKSPTQSHITINGNSG). Phosphoserine is present on residues Ser27, Ser28, and Ser40. Positions 83 to 92 (PTQSHITING) are enriched in polar residues. 2 positions are modified to phosphoserine: Ser130 and Ser143. Met148 bears the Alanine amide mark. One can recognise a SoHo domain in the interval 166–227 (VIKAPHYPGI…YNTPYTYNAG (62 aa)). The span at 235–247 (AQSHPAAKTQTYR) shows a compositional bias: polar residues. Disordered regions lie at residues 235–314 (AQSH…EPGK) and 329–407 (SSID…GDDS). Basic and acidic residues-rich tracts occupy residues 252 to 262 (SHSDNGTDAFK) and 276 to 312 (RPRDQSSTEKHDWDPPDRKVDTRKFRSEPRSIFEYEP). The residue at position 254 (Ser254) is a Phosphoserine. The segment covering 329–343 (SSIDRSLERPSSSAS) has biased composition (polar residues). Phosphoserine is present on residues Ser334, Ser340, Ser343, and Ser354. Thr372 bears the Phosphothreonine mark. Ser382 carries the post-translational modification Phosphoserine. Residues 382 to 399 (SSSTFTTSFISSSPSSPS) show a composition bias toward low complexity. Residue Thr387 is modified to Phosphothreonine. 13 positions are modified to phosphoserine: Ser392, Ser393, Ser394, Ser396, Ser397, Ser399, Ser478, Ser589, Ser592, Ser645, Ser648, Ser844, and Ser938. Positions 929–958 (QDHESPRSYSSTLTDLGRSVSRERRGTPEK) are disordered. Residues 948–958 (VSRERRGTPEK) show a composition bias toward basic and acidic residues. SH3 domains follow at residues 959-1018 (EVKL…KLTP) and 1034-1095 (GEIG…VVKR). Residues Ser1113 and Ser1119 each carry the phosphoserine modification. Residues 1137 to 1196 (GGGEPFQALYNYTPRNEDELELRESDVVDVMEKCDDGWFVGTSRRTKFFGTFPGNYVKRL) enclose the SH3 3 domain.

In terms of assembly, interacts with ABL1/c-Abl, ABL2/v-Abl/Arg, ACTN, CBL and PALLD. Interacts with ABL, CBL, DNM1, DNM2, FLOT1, AFDN, PTK2B/PYK2, SAPAP, SPTAN1, SYNJ1, SYNJ2, VCL/vinculin and WASF. Interacts with PTPN12 and WASF1 via its SH3 domains; this interaction may mediate the partial PTPN12 and WASF1 translocation to focal adhesion sites. Post-translationally, ubiquitinated by CBL. In terms of tissue distribution, expressed in brain; found in synapses in cerebellum.

It localises to the cytoplasm. The protein resides in the perinuclear region. The protein localises to the apical cell membrane. Its subcellular location is the cell junction. It is found in the focal adhesion. It localises to the cell projection. The protein resides in the lamellipodium. Its function is as follows. Adapter protein that plays a role in the assembling of signaling complexes, being a link between ABL kinases and actin cytoskeleton. Can form complex with ABL1 and CBL, thus promoting ubiquitination and degradation of ABL1. May play a role in the regulation of pancreatic cell adhesion, possibly by acting on WASF1 phosphorylation, enhancing phosphorylation by ABL1, as well as dephosphorylation by PTPN12. Isoform 2 increases water and sodium absorption in the intestine and gall-bladder. This is Sorbin and SH3 domain-containing protein 2 (Sorbs2) from Rattus norvegicus (Rat).